The chain runs to 76 residues: KANTR integral membrane protein (76 aa).

The N-terminal stretch at 1–25 is a signal peptide; it reads MSPFSLLILVICAFSLFFLINLSRG. The Extracellular segment spans residues 26–34; it reads LSILLVFTK. The chain crosses the membrane as a helical span at residues 35–55; it reads NQLLALLLLSIVSLFSISLIS. Over 56-76 the chain is Cytoplasmic; the sequence is ALIFFDLLPSTFFGFILLLFF.

Its subcellular location is the membrane. This chain is KANTR integral membrane protein, found in Mus musculus (Mouse).